A 165-amino-acid chain; its full sequence is ATP synthase subunit b (165 aa).

A helical transmembrane segment spans residues 7 to 27 (STTIGDIIIVSGSVLLLFILI).

It belongs to the ATPase B chain family. F-type ATPases have 2 components, F(1) - the catalytic core - and F(0) - the membrane proton channel. F(1) has five subunits: alpha(3), beta(3), gamma(1), delta(1), epsilon(1). F(0) has three main subunits: a(1), b(2) and c(10-14). The alpha and beta chains form an alternating ring which encloses part of the gamma chain. F(1) is attached to F(0) by a central stalk formed by the gamma and epsilon chains, while a peripheral stalk is formed by the delta and b chains.

The protein resides in the cell membrane. Its function is as follows. F(1)F(0) ATP synthase produces ATP from ADP in the presence of a proton or sodium gradient. F-type ATPases consist of two structural domains, F(1) containing the extramembraneous catalytic core and F(0) containing the membrane proton channel, linked together by a central stalk and a peripheral stalk. During catalysis, ATP synthesis in the catalytic domain of F(1) is coupled via a rotary mechanism of the central stalk subunits to proton translocation. In terms of biological role, component of the F(0) channel, it forms part of the peripheral stalk, linking F(1) to F(0). This is ATP synthase subunit b from Streptococcus agalactiae serotype Ia (strain ATCC 27591 / A909 / CDC SS700).